We begin with the raw amino-acid sequence, 448 residues long: Tubulin beta chain (448 aa).

Residues Gln-11, Glu-69, Ser-138, Gly-142, Thr-143, Gly-144, Asn-204, and Asn-226 each coordinate GTP. Mg(2+) is bound at residue Glu-69. The segment at Tyr-425–Glu-448 is disordered. Over residues Glu-432–Glu-448 the composition is skewed to acidic residues.

Belongs to the tubulin family. As to quaternary structure, dimer of alpha and beta chains. A typical microtubule is a hollow water-filled tube with an outer diameter of 25 nm and an inner diameter of 15 nM. Alpha-beta heterodimers associate head-to-tail to form protofilaments running lengthwise along the microtubule wall with the beta-tubulin subunit facing the microtubule plus end conferring a structural polarity. Microtubules usually have 13 protofilaments but different protofilament numbers can be found in some organisms and specialized cells. Requires Mg(2+) as cofactor.

Its subcellular location is the cytoplasm. It localises to the cytoskeleton. Functionally, tubulin is the major constituent of microtubules, a cylinder consisting of laterally associated linear protofilaments composed of alpha- and beta-tubulin heterodimers. Microtubules grow by the addition of GTP-tubulin dimers to the microtubule end, where a stabilizing cap forms. Below the cap, tubulin dimers are in GDP-bound state, owing to GTPase activity of alpha-tubulin. This is Tubulin beta chain from Aspergillus flavus.